A 98-amino-acid polypeptide reads, in one-letter code: TTCTTTQQTAAYVALVSILSDSSFNQCATDSGYSMLTATALPTTAQYKLMCASTACKTMITKIVSLNAPDCELTVPTSGLVLNVYSYANGFSSTCASL.

3 disulfides stabilise this stretch: Cys-3-Cys-71, Cys-27-Cys-56, and Cys-51-Cys-95.

It is found in the secreted. Induces local and distal defense responses (incompatible hypersensitive reaction) in plants from the solanaceae and cruciferae families. Elicits leaf necrosis and causes the accumulation of pathogenesis-related proteins. Might interact with the lipidic molecules of the plasma membrane. The polypeptide is Alpha-elicitin hibernalin (Phytophthora hibernalis).